Here is a 530-residue protein sequence, read N- to C-terminus: Ubiquitin carboxyl-terminal hydrolase 17-like protein 22 (530 aa).

One can recognise a USP domain in the interval 80 to 375; it reads AGLQNMGNTC…QAYVLFYIQK (296 aa). Cys89 functions as the Nucleophile in the catalytic mechanism. The active-site Proton acceptor is the His334. Basic and acidic residues-rich tracts occupy residues 382–392 and 398–412; these read SESVSRGREPR and DTDRRATQGELKRDH. 2 disordered regions span residues 382-412 and 476-530; these read SESVSRGREPRALGAEDTDRRATQGELKRDH and KNHH…LVCQ. Over residues 484–495 the composition is skewed to low complexity; that stretch reads SSLLKLSSTTPT. Over residues 496–505 the composition is skewed to polar residues; that stretch reads HQESMNTGTL. The span at 510–524 shows a compositional bias: basic residues; it reads GRARRSKGKNKHSKR.

Belongs to the peptidase C19 family. USP17 subfamily.

The protein resides in the nucleus. It is found in the endoplasmic reticulum. The catalysed reaction is Thiol-dependent hydrolysis of ester, thioester, amide, peptide and isopeptide bonds formed by the C-terminal Gly of ubiquitin (a 76-residue protein attached to proteins as an intracellular targeting signal).. Its function is as follows. Deubiquitinating enzyme that removes conjugated ubiquitin from specific proteins to regulate different cellular processes that may include cell proliferation, progression through the cell cycle, apoptosis, cell migration, and the cellular response to viral infection. In Homo sapiens (Human), this protein is Ubiquitin carboxyl-terminal hydrolase 17-like protein 22 (USP17L22).